Reading from the N-terminus, the 231-residue chain is GTP-binding protein RHO3 (231 aa).

GTP is bound at residue 23 to 30 (GDGACGKT). Positions 45–53 (YEPTVFENY) match the Effector region motif. GTP contacts are provided by residues 70 to 74 (DTAGQ) and 128 to 131 (LKCD). Residues 139-150 (SNAITPNNIQQD) show a composition bias toward polar residues. The segment at 139 to 165 (SNAITPNNIQQDNSVSNDNGNNINSTS) is disordered. Positions 151 to 165 (NSVSNDNGNNINSTS) are enriched in low complexity. The residue at position 228 (Cys228) is a Cysteine methyl ester. A lipid anchor (S-farnesyl cysteine) is attached at Cys228. Positions 229–231 (TIM) are cleaved as a propeptide — removed in mature form.

It belongs to the small GTPase superfamily. Rho family. As to quaternary structure, interacts with TOS7.

The protein localises to the cell membrane. Activity is positively regulated by the GTPase activating protein (GAP) RGD1. Plays an important role in cell growth. Required to keep the uninucleated state. Modulates morphogenesis during bud growth via directing organization of the actin cytoskeleton and the position of the secretory machinery for exocytosis. In Saccharomyces cerevisiae (strain ATCC 204508 / S288c) (Baker's yeast), this protein is GTP-binding protein RHO3.